Here is a 978-residue protein sequence, read N- to C-terminus: Sensor histidine kinase TodS (978 aa).

In terms of domain architecture, PAS 1 spans Cys-32–Ser-103. In terms of domain architecture, PAC 1 spans Val-108–Leu-162. The Histidine kinase 1 domain occupies Lys-187–Ala-405. His-190 carries the phosphohistidine; by autocatalysis modification. In terms of domain architecture, Response regulatory spans Arg-452–Val-567. Position 500 is a 4-aspartylphosphate (Asp-500). Residues Ser-611–Gly-681 enclose the PAS 2 domain. The 53-residue stretch at Tyr-685–Gln-737 folds into the PAC 2 domain. A Histidine kinase 2 domain is found at Tyr-757 to Gln-974. His-760 is modified (phosphohistidine).

Autophosphorylated. Activation requires a sequential transfer of a phosphate group from a His in the primary transmitter domain, to an Asp in the receiver domain and to a His in the secondary transmitter domain.

The protein resides in the cytoplasm. The enzyme catalyses ATP + protein L-histidine = ADP + protein N-phospho-L-histidine.. With respect to regulation, activity is regulated by agonists and antagonists. Binding of agonists such as toluene or benzene to TodS stimulates autophosphorylation at His-190. Activity is inhibited by antagonists such as o-xylene, o-chlorotoluene and trimethylbenzene isomers, which bind to TodS but do not stimulate autophosphorylation. Agonists and antagonists bind to the same PAS domain. Its function is as follows. Member of the two-component regulatory system TodS/TodT involved in the regulation of toluene degradation. Phosphorylates TodT via a four-step phosphorelay in response to toluene. Can also be induced by benzene and ethylbenzene. The polypeptide is Sensor histidine kinase TodS (todS) (Pseudomonas putida (strain DOT-T1E)).